The primary structure comprises 486 residues: Aspartyl/glutamyl-tRNA(Asn/Gln) amidotransferase subunit B (486 aa).

It belongs to the GatB/GatE family. GatB subfamily. As to quaternary structure, heterotrimer of A, B and C subunits.

The catalysed reaction is L-glutamyl-tRNA(Gln) + L-glutamine + ATP + H2O = L-glutaminyl-tRNA(Gln) + L-glutamate + ADP + phosphate + H(+). The enzyme catalyses L-aspartyl-tRNA(Asn) + L-glutamine + ATP + H2O = L-asparaginyl-tRNA(Asn) + L-glutamate + ADP + phosphate + 2 H(+). Functionally, allows the formation of correctly charged Asn-tRNA(Asn) or Gln-tRNA(Gln) through the transamidation of misacylated Asp-tRNA(Asn) or Glu-tRNA(Gln) in organisms which lack either or both of asparaginyl-tRNA or glutaminyl-tRNA synthetases. The reaction takes place in the presence of glutamine and ATP through an activated phospho-Asp-tRNA(Asn) or phospho-Glu-tRNA(Gln). This Janthinobacterium sp. (strain Marseille) (Minibacterium massiliensis) protein is Aspartyl/glutamyl-tRNA(Asn/Gln) amidotransferase subunit B.